The sequence spans 330 residues: DNA-directed RNA polymerase subunit alpha (330 aa).

An alpha N-terminal domain (alpha-NTD) region spans residues 1–232 (MAILAFQKPD…YHFMLFSDEK (232 aa)). An alpha C-terminal domain (alpha-CTD) region spans residues 248–330 (EEVLHMRQLL…DISKYKLDKE (83 aa)).

Belongs to the RNA polymerase alpha chain family. In terms of assembly, homodimer. The RNAP catalytic core consists of 2 alpha, 1 beta, 1 beta' and 1 omega subunit. When a sigma factor is associated with the core the holoenzyme is formed, which can initiate transcription.

The enzyme catalyses RNA(n) + a ribonucleoside 5'-triphosphate = RNA(n+1) + diphosphate. Functionally, DNA-dependent RNA polymerase catalyzes the transcription of DNA into RNA using the four ribonucleoside triphosphates as substrates. The protein is DNA-directed RNA polymerase subunit alpha of Bacteroides fragilis (strain ATCC 25285 / DSM 2151 / CCUG 4856 / JCM 11019 / LMG 10263 / NCTC 9343 / Onslow / VPI 2553 / EN-2).